A 487-amino-acid polypeptide reads, in one-letter code: Dihydrofolate synthase/folylpolyglutamate synthase (487 aa).

Residue 44 to 46 (DPS) coordinates 7,8-dihydropteroate. 74–77 (GKTS) lines the ATP pocket. Residues Thr-76 and Ser-98 each coordinate Mg(2+). Residue 150 to 153 (SKFE) coordinates 7,8-dihydropteroate. Glu-174 provides a ligand contact to Mg(2+). 181-183 (WDA) contributes to the 7,8-dihydropteroate binding site. Mg(2+) contacts are provided by His-201 and Asp-203. ATP contacts are provided by residues Asn-301, Arg-338, and 351–354 (DAAH). Asp-384 provides a ligand contact to Mg(2+).

Belongs to the folylpolyglutamate synthase family. In terms of assembly, monomer. Mg(2+) serves as cofactor.

It catalyses the reaction 7,8-dihydropteroate + L-glutamate + ATP = 7,8-dihydrofolate + ADP + phosphate + H(+). The catalysed reaction is (6S)-5,6,7,8-tetrahydrofolyl-(gamma-L-Glu)(n) + L-glutamate + ATP = (6S)-5,6,7,8-tetrahydrofolyl-(gamma-L-Glu)(n+1) + ADP + phosphate + H(+). Its pathway is cofactor biosynthesis; tetrahydrofolate biosynthesis; 7,8-dihydrofolate from 2-amino-4-hydroxy-6-hydroxymethyl-7,8-dihydropteridine diphosphate and 4-aminobenzoate: step 2/2. It participates in cofactor biosynthesis; tetrahydrofolylpolyglutamate biosynthesis. In terms of biological role, catalyzes the addition of a glutamate residue to dihydropteroate (7,8-dihydropteroate or H2Pte) to form dihydrofolate (7,8-dihydrofolate monoglutamate or H2Pte-Glu). Also catalyzes successive additions of L-glutamate to tetrahydrofolate, leading to folylpolyglutamate derivatives. Functionally, is involved in the bioactivation of the antituberculous drug para-aminosalicylic acid (PAS). Is able to use hydroxy-dihydropteroate (H2PtePAS) as substrate, which is the product formed by the action of DHPS (FolP1) on PAS, leading to hydroxy-dihydrofolate (H2PtePAS-Glu). This compound inhibits dihydrofolate reductase DHFR (DfrA), the next enzyme in the folate pathway, and thus disrupts the folate-dependent metabolic pathways. The chain is Dihydrofolate synthase/folylpolyglutamate synthase from Mycobacterium tuberculosis (strain ATCC 25618 / H37Rv).